Consider the following 884-residue polypeptide: Protein translocase subunit SecA (884 aa).

ATP-binding positions include Q83, 101–105 (GEGKT), and D491.

This sequence belongs to the SecA family.

Its subcellular location is the plastid. The protein resides in the chloroplast stroma. It localises to the chloroplast thylakoid membrane. The catalysed reaction is ATP + H2O + cellular proteinSide 1 = ADP + phosphate + cellular proteinSide 2.. Functionally, has a central role in coupling the hydrolysis of ATP to the transfer of proteins across the thylakoid membrane. The protein is Protein translocase subunit SecA of Porphyra purpurea (Red seaweed).